A 434-amino-acid polypeptide reads, in one-letter code: Glutamyl-tRNA reductase (434 aa).

Substrate-binding positions include 49-52 (TCNR), Ser-109, 114-116 (EPQ), and Gln-120. The active-site Nucleophile is Cys-50. Residue 189–194 (GAGEMC) participates in NADP(+) binding.

It belongs to the glutamyl-tRNA reductase family. Homodimer.

It carries out the reaction (S)-4-amino-5-oxopentanoate + tRNA(Glu) + NADP(+) = L-glutamyl-tRNA(Glu) + NADPH + H(+). It participates in porphyrin-containing compound metabolism; protoporphyrin-IX biosynthesis; 5-aminolevulinate from L-glutamyl-tRNA(Glu): step 1/2. Catalyzes the NADPH-dependent reduction of glutamyl-tRNA(Glu) to glutamate 1-semialdehyde (GSA). The protein is Glutamyl-tRNA reductase of Geotalea daltonii (strain DSM 22248 / JCM 15807 / FRC-32) (Geobacter daltonii).